A 245-amino-acid polypeptide reads, in one-letter code: 1-(5-phosphoribosyl)-5-[(5-phosphoribosylamino)methylideneamino] imidazole-4-carboxamide isomerase (245 aa).

Aspartate 7 serves as the catalytic Proton acceptor. Aspartate 129 serves as the catalytic Proton donor.

The protein belongs to the HisA/HisF family.

Its subcellular location is the cytoplasm. It catalyses the reaction 1-(5-phospho-beta-D-ribosyl)-5-[(5-phospho-beta-D-ribosylamino)methylideneamino]imidazole-4-carboxamide = 5-[(5-phospho-1-deoxy-D-ribulos-1-ylimino)methylamino]-1-(5-phospho-beta-D-ribosyl)imidazole-4-carboxamide. It participates in amino-acid biosynthesis; L-histidine biosynthesis; L-histidine from 5-phospho-alpha-D-ribose 1-diphosphate: step 4/9. The protein is 1-(5-phosphoribosyl)-5-[(5-phosphoribosylamino)methylideneamino] imidazole-4-carboxamide isomerase of Escherichia coli (strain 55989 / EAEC).